The following is a 106-amino-acid chain: ATP-dependent Clp protease adapter protein ClpS (106 aa).

Belongs to the ClpS family. As to quaternary structure, binds to the N-terminal domain of the chaperone ClpA.

Involved in the modulation of the specificity of the ClpAP-mediated ATP-dependent protein degradation. This is ATP-dependent Clp protease adapter protein ClpS from Photobacterium profundum (strain SS9).